A 597-amino-acid polypeptide reads, in one-letter code: Elongation factor 4 (597 aa).

The region spanning 2-184 (KNIRNFSIIA…TMIAKIPPPV (183 aa)) is the tr-type G domain. Residues 14–19 (DHGKST) and 131–134 (NKID) contribute to the GTP site.

Belongs to the TRAFAC class translation factor GTPase superfamily. Classic translation factor GTPase family. LepA subfamily.

Its subcellular location is the cell inner membrane. It carries out the reaction GTP + H2O = GDP + phosphate + H(+). Functionally, required for accurate and efficient protein synthesis under certain stress conditions. May act as a fidelity factor of the translation reaction, by catalyzing a one-codon backward translocation of tRNAs on improperly translocated ribosomes. Back-translocation proceeds from a post-translocation (POST) complex to a pre-translocation (PRE) complex, thus giving elongation factor G a second chance to translocate the tRNAs correctly. Binds to ribosomes in a GTP-dependent manner. This is Elongation factor 4 from Methylobacillus flagellatus (strain ATCC 51484 / DSM 6875 / VKM B-1610 / KT).